Reading from the N-terminus, the 174-residue chain is UPF0316 protein lwe1794 (174 aa).

The next 3 membrane-spanning stretches (helical) occupy residues 4-24, 36-56, and 62-82; these read GLFIVVTIFVVNILYVTIYTV, LAALSSVFEMIIYVVALSLVL, and IANVLAYAIGFGVGVIVGMKI.

It belongs to the UPF0316 family.

It is found in the cell membrane. The chain is UPF0316 protein lwe1794 from Listeria welshimeri serovar 6b (strain ATCC 35897 / DSM 20650 / CCUG 15529 / CIP 8149 / NCTC 11857 / SLCC 5334 / V8).